Reading from the N-terminus, the 492-residue chain is Cytochrome P450 2A12 (492 aa).

Cysteine 437 provides a ligand contact to heme.

The protein belongs to the cytochrome P450 family. Heme is required as a cofactor. As to expression, liver.

Its subcellular location is the endoplasmic reticulum membrane. The protein resides in the microsome membrane. The enzyme catalyses an organic molecule + reduced [NADPH--hemoprotein reductase] + O2 = an alcohol + oxidized [NADPH--hemoprotein reductase] + H2O + H(+). In terms of biological role, highly active in the 7-alpha-hydroxylation of testosterone. The polypeptide is Cytochrome P450 2A12 (Cyp2a12) (Mus musculus (Mouse)).